A 939-amino-acid chain; its full sequence is UvrABC system protein A (939 aa).

32–39 (GLSGSGKS) provides a ligand contact to ATP. Residues 252 to 279 (CADCGISIDELAPRMFSFNSPFGKCERC) form a C4-type zinc finger. ABC transporter domains are found at residues 309–588 (WGDS…ENSL) and 608–936 (GNGN…KYLK). Residue 640-647 (GVSGSGKS) coordinates ATP. Residues 739–765 (CEACSGDGIIKIEMQFLSDVYVPCEVC) form a C4-type zinc finger.

Belongs to the ABC transporter superfamily. UvrA family. Forms a heterotetramer with UvrB during the search for lesions.

Its subcellular location is the cytoplasm. Its function is as follows. The UvrABC repair system catalyzes the recognition and processing of DNA lesions. UvrA is an ATPase and a DNA-binding protein. A damage recognition complex composed of 2 UvrA and 2 UvrB subunits scans DNA for abnormalities. When the presence of a lesion has been verified by UvrB, the UvrA molecules dissociate. The sequence is that of UvrABC system protein A from Clostridium perfringens (strain 13 / Type A).